Consider the following 1008-residue polypeptide: Collagen, type I, alpha 1a (1008 aa).

Residues 1 to 21 (SPAMPVPGPMGPMGPRGPPGS) are compositionally biased toward pro residues. Positions 1–920 (SPAMPVPGPM…PQEKAPDPFR (920 aa)) are disordered. Over residues 39–53 (NGEDGESGKPGRGGE) the composition is skewed to basic and acidic residues. Positions 92–117 (TPGAMGPRGAAGAAGARGNDGAAGAA) are enriched in low complexity. The segment covering 119-132 (PPGPTGPAGPPGFP) has biased composition (pro residues). Residues 133 to 151 (GGPGAKGDAGAQGGRGPEG) show a composition bias toward gly residues. Low complexity-rich tracts occupy residues 152-195 (PAGA…AGAP) and 204-230 (SGPQ…APGV). Gly residues predominate over residues 253–265 (GARGGPGGRGFPG). Composition is skewed to low complexity over residues 339 to 354 (VGAR…PGPK) and 410 to 422 (LPGE…PAGA). Positions 423–435 (RGDRGFPGERGAK) are enriched in basic and acidic residues. Composition is skewed to low complexity over residues 437 to 456 (DAGA…QGMP), 489 to 524 (RGLT…ARGA), and 537 to 573 (AGFA…AGPT). Positions 604–617 (PPGPSGNPGPPGPA) are enriched in pro residues. Residues 634-661 (PAGRPGELGAAGPPGPAGEKGSPGSEGA) show a composition bias toward low complexity. Residues 696-709 (GEAGGPSGPGGERG) are compositionally biased toward gly residues. Residues 717–735 (PGLAGAPGEPGREGSPGNE) show a composition bias toward low complexity. Pro residues predominate over residues 761 to 771 (APGPPGAPGPV). The segment covering 785–806 (PAGPAGSAGPSGPRGPAGAPGL) has biased composition (low complexity). Residues 807–821 (RGDKGESGEAGERRG) are compositionally biased toward basic and acidic residues. Positions 832–868 (SGSSGEQGPAGAAGPAGPRGPAGSAGSPGKDGMSGLP) are enriched in low complexity. Residues 884–896 (AGPPGPPGPPGAP) are compositionally biased toward pro residues. Residues 978-1008 (TSRLPLLDLAPMDVGAPDQEFGLEVGPVCFL) form the Fibrillar collagen NC1 domain.

It belongs to the fibrillar collagen family.

It localises to the secreted. The protein resides in the extracellular space. Its subcellular location is the extracellular matrix. This Epinephelus aeneus (White grouper) protein is Collagen, type I, alpha 1a.